The sequence spans 418 residues: Serine protease inhibitor A3N (418 aa).

Positions 1–29 (MTRLVTLELLMAGIGSALLCFPDCILGED) are cleaved as a signal peptide. Ser-93 carries the phosphoserine modification. N-linked (GlcNAc...) asparagine glycans are attached at residues Asn-104, Asn-258, and Asn-269. Residues 367–394 (GTEAAAATGVKFVPMSAKLDPLIIAFDR) are RCL.

Belongs to the serpin family. Post-translationally, N-glycosylated. As to expression, liver.

Its subcellular location is the secreted. The polypeptide is Serine protease inhibitor A3N (Serpina3n) (Rattus norvegicus (Rat)).